The primary structure comprises 290 residues: 33 kDa chaperonin (290 aa).

Cystine bridges form between Cys-235–Cys-237 and Cys-268–Cys-271.

Belongs to the HSP33 family. Post-translationally, under oxidizing conditions two disulfide bonds are formed involving the reactive cysteines. Under reducing conditions zinc is bound to the reactive cysteines and the protein is inactive.

It localises to the cytoplasm. Its function is as follows. Redox regulated molecular chaperone. Protects both thermally unfolding and oxidatively damaged proteins from irreversible aggregation. Plays an important role in the bacterial defense system toward oxidative stress. The protein is 33 kDa chaperonin of Streptococcus pyogenes serotype M6 (strain ATCC BAA-946 / MGAS10394).